Reading from the N-terminus, the 682-residue chain is Acetyl-coenzyme A synthetase 2-like, mitochondrial (682 aa).

The transit peptide at M1–L38 directs the protein to the mitochondrion. Residues R217–R220 and T334 each bind CoA. The residue at position 389 (K389) is an N6-acetyllysine. ATP is bound by residues G410 to P412, D434 to T439, D526, and R541. S549 lines the CoA pocket. Position 552 (R552) interacts with ATP. K635 carries the N6-acetyllysine modification.

The protein belongs to the ATP-dependent AMP-binding enzyme family. Interacts with SIRT3. Reversibly acetylated at Lys-635. The acetyl-CoA synthase activity is inhibited by acetylation and activated by deacetylation mediated by the deacetylase SIRT3. As to expression, highly expressed in heart, testis, kidney, skeletal muscle, lung and spleen. Detected at low levels in brain.

It is found in the mitochondrion matrix. The enzyme catalyses acetate + ATP + CoA = acetyl-CoA + AMP + diphosphate. The catalysed reaction is propanoate + ATP + CoA = propanoyl-CoA + AMP + diphosphate. With respect to regulation, inhibited by acetylation at Lys-635 and activated by deacetylation mediated by the deacetylase SIRT3. Catalyzes the synthesis of acetyl-CoA from short-chain fatty acids. Acetate is the preferred substrate. Can also utilize propionate with a much lower affinity. Provides acetyl-CoA that is utilized mainly for oxidation under ketogenic conditions. Involved in thermogenesis under ketogenic conditions, using acetate as a vital fuel when carbohydrate availability is insufficient. The polypeptide is Acetyl-coenzyme A synthetase 2-like, mitochondrial (Acss1) (Mus musculus (Mouse)).